A 529-amino-acid polypeptide reads, in one-letter code: Glutamyl-tRNA reductase (529 aa).

47–50 (TCNR) is a binding site for substrate. Catalysis depends on Cys-48, which acts as the Nucleophile. Residues 56–80 (SPRQQAPAPPRPGSAPPPSDEELSR) form a disordered region. Positions 62–73 (PAPPRPGSAPPP) are enriched in pro residues. Substrate is bound by residues Ser-125, 130 to 132 (EPQ), and Gln-136. 205–210 (GAGDMA) contributes to the NADP(+) binding site. Positions 454 to 505 (RGAVDGPPTPRSARGAAPPASGARGGGSPRHADPRPQAAEDNGVYARQPGGR) are disordered. Over residues 464–475 (RSARGAAPPASG) the composition is skewed to low complexity.

The protein belongs to the glutamyl-tRNA reductase family. As to quaternary structure, homodimer.

The catalysed reaction is (S)-4-amino-5-oxopentanoate + tRNA(Glu) + NADP(+) = L-glutamyl-tRNA(Glu) + NADPH + H(+). It functions in the pathway porphyrin-containing compound metabolism; protoporphyrin-IX biosynthesis; 5-aminolevulinate from L-glutamyl-tRNA(Glu): step 1/2. Its function is as follows. Catalyzes the NADPH-dependent reduction of glutamyl-tRNA(Glu) to glutamate 1-semialdehyde (GSA). This chain is Glutamyl-tRNA reductase, found in Sorangium cellulosum (strain So ce56) (Polyangium cellulosum (strain So ce56)).